Here is a 295-residue protein sequence, read N- to C-terminus: MADYLVKSVAGNEMFRAYAVSATGVVAEAQRRHDTWSAASAALGRSLVGTLLLASSVLKGEEQMTVKINGNGPVGGIVVDGNAKGTVKGYLQHPHVHLPLNDKHKIDVKAAVGTDGFLSVTKDQGVGDPFTGTVALVSGELGEDFTYYLAQSEQIPSAVGLSVFVNDDNSIGVAGGFLVQVLPNATDEAISSLENKLKDMPLVSQLMRDGKSPEDILDLLFDGDVKVLDKMPVKFECDCSKERFAEALMALPKHEVQAMIDEDHGATAVCHFCGDQYQFSERELEAVLSRSKGDA.

2 cysteine pairs are disulfide-bonded: Cys-237–Cys-239 and Cys-270–Cys-273.

Belongs to the HSP33 family. Post-translationally, under oxidizing conditions two disulfide bonds are formed involving the reactive cysteines. Under reducing conditions zinc is bound to the reactive cysteines and the protein is inactive.

It is found in the cytoplasm. In terms of biological role, redox regulated molecular chaperone. Protects both thermally unfolding and oxidatively damaged proteins from irreversible aggregation. Plays an important role in the bacterial defense system toward oxidative stress. The sequence is that of 33 kDa chaperonin from Lactiplantibacillus plantarum (strain ATCC BAA-793 / NCIMB 8826 / WCFS1) (Lactobacillus plantarum).